A 478-amino-acid chain; its full sequence is Protein nucleotidyltransferase YdiU (478 aa).

Gly-84, Gly-86, Arg-87, Lys-107, Asp-119, Gly-120, Arg-170, and Arg-177 together coordinate ATP. The active-site Proton acceptor is the Asp-246. Mg(2+) contacts are provided by Asn-247 and Asp-256. An ATP-binding site is contributed by Asp-256.

It belongs to the SELO family. Mg(2+) is required as a cofactor. The cofactor is Mn(2+).

The enzyme catalyses L-seryl-[protein] + ATP = 3-O-(5'-adenylyl)-L-seryl-[protein] + diphosphate. It carries out the reaction L-threonyl-[protein] + ATP = 3-O-(5'-adenylyl)-L-threonyl-[protein] + diphosphate. The catalysed reaction is L-tyrosyl-[protein] + ATP = O-(5'-adenylyl)-L-tyrosyl-[protein] + diphosphate. It catalyses the reaction L-histidyl-[protein] + UTP = N(tele)-(5'-uridylyl)-L-histidyl-[protein] + diphosphate. The enzyme catalyses L-seryl-[protein] + UTP = O-(5'-uridylyl)-L-seryl-[protein] + diphosphate. It carries out the reaction L-tyrosyl-[protein] + UTP = O-(5'-uridylyl)-L-tyrosyl-[protein] + diphosphate. In terms of biological role, nucleotidyltransferase involved in the post-translational modification of proteins. It can catalyze the addition of adenosine monophosphate (AMP) or uridine monophosphate (UMP) to a protein, resulting in modifications known as AMPylation and UMPylation. The protein is Protein nucleotidyltransferase YdiU of Escherichia coli (strain K12 / MC4100 / BW2952).